A 485-amino-acid chain; its full sequence is Elongation factor TuB, chloroplastic (485 aa).

The N-terminal 76 residues, 1-76 (MASISAASAT…TTHPRRFTVR (76 aa)), are a transit peptide targeting the chloroplast. Residues 86–290 (KPHVNIGTIG…NVDEYIPIPQ (205 aa)) enclose the tr-type G domain. Residues 95–102 (GHVDHGKT) are G1. 95–102 (GHVDHGKT) is a GTP binding site. Residues 136 to 140 (GITIN) form a G2 region. The G3 stretch occupies residues 157–160 (DCPG). Residues 157 to 161 (DCPGH) and 212 to 215 (NKQD) each bind GTP. The segment at 212–215 (NKQD) is G4. The interval 250–252 (SAL) is G5.

It belongs to the TRAFAC class translation factor GTPase superfamily. Classic translation factor GTPase family. EF-Tu/EF-1A subfamily.

It is found in the plastid. It localises to the chloroplast. Its function is as follows. This protein promotes the GTP-dependent binding of aminoacyl-tRNA to the A-site of ribosomes during protein biosynthesis. The sequence is that of Elongation factor TuB, chloroplastic (TUFB) from Nicotiana sylvestris (Wood tobacco).